A 123-amino-acid chain; its full sequence is Histone H1-like protein HC1 (123 aa).

A disordered region spans residues Ile-54 to Lys-123. The segment covering Leu-61–Lys-75 has biased composition (basic residues). Over residues Lys-85–Pro-102 the composition is skewed to low complexity. The segment covering Ala-103–Lys-123 has biased composition (basic residues).

It belongs to the histone H1/H5 family. HCT subfamily.

Might have a role analogous to that of eukaryotic histone proteins. This chain is Histone H1-like protein HC1 (hctA), found in Chlamydia pneumoniae (Chlamydophila pneumoniae).